The chain runs to 222 residues: Triosephosphate isomerase (222 aa).

9 to 11 (NYK) serves as a coordination point for substrate. His-93 acts as the Electrophile in catalysis. The active-site Proton acceptor is Glu-141. Residues Ile-146, Gly-181, and 202 to 203 (AS) each bind substrate.

This sequence belongs to the triosephosphate isomerase family. In terms of assembly, homotetramer; dimer of dimers.

Its subcellular location is the cytoplasm. It catalyses the reaction D-glyceraldehyde 3-phosphate = dihydroxyacetone phosphate. Its pathway is carbohydrate biosynthesis; gluconeogenesis. The protein operates within carbohydrate degradation; glycolysis; D-glyceraldehyde 3-phosphate from glycerone phosphate: step 1/1. Involved in the gluconeogenesis. Catalyzes stereospecifically the conversion of dihydroxyacetone phosphate (DHAP) to D-glyceraldehyde-3-phosphate (G3P). The polypeptide is Triosephosphate isomerase (Methanosarcina acetivorans (strain ATCC 35395 / DSM 2834 / JCM 12185 / C2A)).